We begin with the raw amino-acid sequence, 434 residues long: Arrestin domain-containing protein 1 (434 aa).

The tract at residues Pro295–Thr345 is disordered. Residues Val330–Pro342 are compositionally biased toward polar residues. 2 consecutive short sequence motifs (PPxY motif) follow at residues Pro401–Tyr404 and Pro414–Tyr417.

This sequence belongs to the arrestin family. As to quaternary structure, interacts (via PPxY motifs) with ITCH (via WW domains); the interaction is direct and participates in the recruitment of the ubiquitin-protein ligase ITCH to the NOTCH1 receptor. Interacts with ARRB1 and ARRB2; the interaction is direct. Interacts with TSG101; may recruit TSG101 to the plasma membrane. Interacts (via PPxY motifs) with WWP2 (via WW domains); ubiquitinates ARRDC1. Interacts with SLC11A2; controls the incorporation of SLC11A2 into extracellular vesicles through an ubiquitination-dependent mechanism. Interacts with WWP1 (via WW domains). Interacts with NEDD4 (via WW domains). Interacts with PDCD6IP. Ubiquitinated. Ubiquitination by WWP2; promotes localization to extracellular microvesicles. Ubiquitinated by WWP1.

The protein resides in the cell membrane. Functionally, functions as an adapter recruiting ubiquitin-protein ligases to their specific substrates. Through an ubiquitination-dependent mechanism plays for instance a role in the incorporation of SLC11A2 into extracellular vesicles. More generally, plays a role in the extracellular transport of proteins between cells through the release in the extracellular space of microvesicles. By participating in the ITCH-mediated ubiquitination and subsequent degradation of NOTCH1, negatively regulates the NOTCH signaling pathway. The protein is Arrestin domain-containing protein 1 of Rattus norvegicus (Rat).